A 311-amino-acid chain; its full sequence is Pyrimidine-specific ribonucleoside hydrolase RihA (311 aa).

Histidine 240 is a catalytic residue.

Belongs to the IUNH family. RihA subfamily.

Functionally, hydrolyzes with equal efficiency cytidine or uridine to ribose and cytosine or uracil, respectively. The polypeptide is Pyrimidine-specific ribonucleoside hydrolase RihA (Escherichia coli O9:H4 (strain HS)).